A 1861-amino-acid chain; its full sequence is Golgi-specific brefeldin A-resistance guanine nucleotide exchange factor 1 (1861 aa).

The DCB; DCB:DCB domain and DCB:HUS domain interaction stretch occupies residues 1-211 (MVDKNIYIIQ…EPKSYVGTNM (211 aa)). The interval 1 to 380 (MVDKNIYIIQ…SVHDMDYVNP (380 aa)) is interaction with RAB1B. Disordered regions lie at residues 210–264 (NMKK…LTGG) and 289–353 (CTDS…VESI). Over residues 227-241 (WKKQKRSPRPPRHTT) the composition is skewed to basic residues. Polar residues predominate over residues 253–262 (NGATLPSNLT). S349 and S352 each carry phosphoserine. Phosphothreonine is present on T507. The HUS; DCB:HUS domain interaction stretch occupies residues 530-550 (RIPSFVTELYINYDCDYYCSN). Residues 603-634 (QEKKETARPGFEAVDGNPETNKSERATSDGKS) are disordered. The 191-residue stretch at 692-882 (ELIEIKNKKK…EDMYHAIKNE (191 aa)) folds into the SEC7 domain. The tract at residues 886-1372 (MPEEQTGLVR…LSRPGPSPLV (487 aa)) is phosphatidylinositol-phosphate binding; required for translocation to the leading edge and for ARF1 activation upon GPCR signaling. The segment covering 1286-1296 (TARADAPDAGA) has biased composition (low complexity). A disordered region spans residues 1286 to 1335 (TARADAPDAGAQSDSELPSYHQNDVSLDRGYTSDSEVYTDHGRPGKIHRS). Positions 1297–1310 (QSDSELPSYHQNDV) are enriched in polar residues. S1298 bears the Phosphoserine mark. Y1316 is modified (phosphotyrosine). Phosphoserine occurs at positions 1318, 1320, and 1335. T1337 carries the post-translational modification Phosphothreonine. Disordered regions lie at residues 1431-1486 (GCKS…EGVP) and 1727-1812 (PMPA…PLIL). Residues 1434–1448 (SQDKRSKSHKYDSKG) show a composition bias toward basic and acidic residues. Phosphoserine is present on residues S1477, S1775, and S1786. Residues 1776–1793 (TRAPSSSSPGSPMASSPS) show a composition bias toward low complexity.

As to quaternary structure, can form homodimers and probably homotetramers. Interacts with COPG1; the interaction is independent on ARF1 activation. Interacts with ARF1, ARF3, ARF4 and ARF5. Interacts with RAB1B (GTP-bound form); required for GBF1 membrane association. Interacts with GGA1, GGA2 and GGA3. Interacts with USO1. Interacts (via SEC7 domain) with PNPLA2 (via C-terminus); the interaction is direct. Interacts with ARMH3.

The protein resides in the golgi apparatus. It localises to the cis-Golgi network. It is found in the endoplasmic reticulum-Golgi intermediate compartment. The protein localises to the trans-Golgi network. Its subcellular location is the cytoplasm. The protein resides in the lipid droplet. It localises to the membrane. In terms of biological role, guanine-nucleotide exchange factor (GEF) for members of the Arf family of small GTPases involved in trafficking in the early secretory pathway; its GEF activity initiates the coating of nascent vesicles via the localized generation of activated ARFs through replacement of GDP with GTP. Recruitment to cis-Golgi membranes requires membrane association of Arf-GDP and can be regulated by ARF1, ARF3, ARF4 and ARF5. Involved in the recruitment of the COPI coat complex to the endoplasmic reticulum exit sites (ERES), and the endoplasmic reticulum-Golgi intermediate (ERGIC) and cis-Golgi compartments which implicates ARF1 activation. Involved in COPI vesicle-dependent retrograde transport from the ERGIC and cis-Golgi compartments to the endoplasmic reticulum (ER). Involved in the trans-Golgi network recruitment of GGA1, GGA2, GGA3, BIG1, BIG2, and the AP-1 adaptor protein complex related to chlathrin-dependent transport; the function requires its GEF activity (probably at least in part on ARF4 and ARF5). Has GEF activity towards ARF1. Has in vitro GEF activity towards ARF5. Involved in the processing of PSAP. Required for the assembly of the Golgi apparatus. The AMPK-phosphorylated form is involved in Golgi disassembly during mitotis and under stress conditions. May be involved in the COPI vesicle-dependent recruitment of PNPLA2 to lipid droplets; however, this function is under debate. In neutrophils, involved in G protein-coupled receptor (GPCR)-mediated chemotaxis und superoxide production. Proposed to be recruited by phosphatidylinositol-phosphates generated upon GPCR stimulation to the leading edge where it recruits and activates ARF1, and is involved in recruitment of GIT2 and the NADPH oxidase complex. Plays a role in maintaining mitochondrial morphology. The chain is Golgi-specific brefeldin A-resistance guanine nucleotide exchange factor 1 from Mus musculus (Mouse).